The primary structure comprises 921 residues: MFARLARALFGSANDRTLKAYQRRVPEINALEPAVQALSDEQLRHKTTEFKERLEKGETLDGLLPEAFAVCREASRRVLGKRHFDVQLIGGMVLHAGRIAEMRTGEGKTLVATLAVYLNALSGKGVHVVTVNDYLARRDAEEMSILYSFLGLTTGVIVPNLSDGERREAYAADITYGTNNEFGFDYLRDNMKYSLADMVQRPFNHAIVDEVDSILIDEARTPLIISGPADDSSDLYRSVDDVVVKLVQEPDVYDKDEKLRSVTLTEHGSHRVEELLAEAGVLQDGGLYDIHNVAVVHHVQQSLRAHTLFTRDVDYIVRDGKVVIIDEFTGRMMDGRRYSDGLHQALEAKEHVEIQQENQTLASITFQNYFRLYPKLSGMTGTAMTEADEFAEIYHLDVVEIPTNLPVRRIDTDDEVYLTAAEKFSAVADLIKEIHETGQPILVGTTSIEKSEYLSHILTQRGIPHNVLNARQHEKEAIIVAQAGAPGAITIATNMAGRGTDIKLGGNIEMLVKASTEGVEDEAQRESVEQNIRAIVEEHHEEVHKAGGLYVIGTERHESRRVDNQLRGRSGRQGDPGNSRFFLSLEDDLIRIFASDRMGAMMQKMGLKEGEAIVHPWLNKALEKAQKRVEARNFDMRKNTLKYDDVMNDQRKEVYAQRREYMATDDLSGVIAELREHTIEDLVHAHIPEKSFAEAWDTEGLTKEVSRILNLDLPIADWAKEDGMDSEGVIERIEAEAAKAQAARTANMGPELMRLIEKQVVLTTFDAVWKEYLHGLDQLRQGIGLRAYGQRDPLNEYKQEAFQMFTAMLDDMRIRVTETMCRIQAVSEPPPFPVINTETSGPSEEPAGLFSQGTTGGDIPAPQPMAGFPSAAPMPPRPQPVPTGAEPDAATLQRWYAETPRNALCPCGSGLKFKHCHGRLA.

ATP contacts are provided by residues Q87, 105–109 (GEGKT), and D501. Residues 831 to 886 (PFPVINTETSGPSEEPAGLFSQGTTGGDIPAPQPMAGFPSAAPMPPRPQPVPTGAE) are disordered. Pro residues predominate over residues 872-881 (APMPPRPQPV). Residues C905, C907, C916, and H917 each contribute to the Zn(2+) site.

It belongs to the SecA family. As to quaternary structure, monomer and homodimer. Part of the essential Sec protein translocation apparatus which comprises SecA, SecYEG and auxiliary proteins SecDF-YajC and YidC. Zn(2+) serves as cofactor.

The protein resides in the cell inner membrane. The protein localises to the cytoplasm. The enzyme catalyses ATP + H2O + cellular proteinSide 1 = ADP + phosphate + cellular proteinSide 2.. Part of the Sec protein translocase complex. Interacts with the SecYEG preprotein conducting channel. Has a central role in coupling the hydrolysis of ATP to the transfer of proteins into and across the cell membrane, serving both as a receptor for the preprotein-SecB complex and as an ATP-driven molecular motor driving the stepwise translocation of polypeptide chains across the membrane. This is Protein translocase subunit SecA from Gluconobacter oxydans (strain 621H) (Gluconobacter suboxydans).